The chain runs to 215 residues: Probable maleylacetoacetate isomerase (215 aa).

Positions 2 to 85 (MSLILYGYWR…YLDETYPAPR (84 aa)) constitute a GST N-terminal domain. One can recognise a GST C-terminal domain in the interval 90-215 (RGAERYQVKA…AAPENQPDAC (126 aa)).

This sequence belongs to the GST superfamily. Zeta family.

It catalyses the reaction 4-maleylacetoacetate = 4-fumarylacetoacetate. It functions in the pathway amino-acid degradation; L-phenylalanine degradation; acetoacetate and fumarate from L-phenylalanine: step 5/6. This Vibrio cholerae serotype O1 (strain ATCC 39315 / El Tor Inaba N16961) protein is Probable maleylacetoacetate isomerase (maiA).